A 307-amino-acid polypeptide reads, in one-letter code: Type 2A encapsulin shell protein (307 aa).

Belongs to the encapsulin family. Family 2A subfamily. Homooligomeric. The encapsulin nanocompartment is formed by 60 subunits; monomers form pentamers which assemble to form shells. There are 12 charged pores where the pentamers meet as well as 3-fold axis channels and dimer channels. In terms of processing, the N-terminus is blocked.

It localises to the encapsulin nanocompartment. Its subcellular location is the cytoplasm. It is found in the cytosol. The protein localises to the cell membrane. Shell component of a type 2A encapsulin nanocompartment. Forms encapsulin nanocompartments about 24 nm in diameter from 60 monomers. Probably encapsulates at least cysteine desulfurase (CyD, AC O32975) and allows passage of cysteine into its interior, probably involved in sulfur metabolism. Expression in M.smegmatis generates a multimeric protein, whereas expression in E.coli does not. The polypeptide is Type 2A encapsulin shell protein (Mycobacterium leprae (strain TN)).